Consider the following 710-residue polypeptide: Polyribonucleotide nucleotidyltransferase (710 aa).

Positions 488 and 494 each coordinate Mg(2+). The KH domain occupies 555–615 (PVIKVISIDP…EKVDAAIEQI (61 aa)). The S1 motif domain maps to 625-688 (GDVFSGKVTR…NLGRLQLEEF (64 aa)). The tract at residues 688 to 710 (FSDSPDHKHGEKRSFKRHRKNDN) is disordered. Basic and acidic residues predominate over residues 691-700 (SPDHKHGEKR). Basic residues predominate over residues 701 to 710 (SFKRHRKNDN).

The protein belongs to the polyribonucleotide nucleotidyltransferase family. Mg(2+) is required as a cofactor.

It localises to the cytoplasm. The enzyme catalyses RNA(n+1) + phosphate = RNA(n) + a ribonucleoside 5'-diphosphate. In terms of biological role, involved in mRNA degradation. Catalyzes the phosphorolysis of single-stranded polyribonucleotides processively in the 3'- to 5'-direction. The polypeptide is Polyribonucleotide nucleotidyltransferase (Pseudothermotoga lettingae (strain ATCC BAA-301 / DSM 14385 / NBRC 107922 / TMO) (Thermotoga lettingae)).